The sequence spans 133 residues: Small ribosomal subunit protein uS9 (133 aa).

Positions 114-133 (VERKKYGKKKARRSPQFSKR) are disordered. The segment covering 118–133 (KYGKKKARRSPQFSKR) has biased composition (basic residues).

This sequence belongs to the universal ribosomal protein uS9 family.

The chain is Small ribosomal subunit protein uS9 from Fusobacterium nucleatum subsp. nucleatum (strain ATCC 25586 / DSM 15643 / BCRC 10681 / CIP 101130 / JCM 8532 / KCTC 2640 / LMG 13131 / VPI 4355).